The sequence spans 175 residues: Disulfide bond formation protein B (175 aa).

At 1-13 the chain is on the cytoplasmic side; it reads MTAFTRFAHSRAS. Residues 14-30 form a helical membrane-spanning segment; it reads WFILTGSAIALEAAALY. Over 31–48 the chain is Periplasmic; that stretch reads FQYVMKLDPCVMCIYQRL. An intrachain disulfide couples Cys40 to Cys43. The helical transmembrane segment at 49 to 64 threads the bilayer; it reads AVFGILASGLIGMTAP. Residues 65-71 lie on the Cytoplasmic side of the membrane; the sequence is KFLIVRI. The helical transmembrane segment at 72-89 threads the bilayer; that stretch reads LGAIGWAVSATWGLKLAL. Over 90 to 144 the chain is Periplasmic; that stretch reads ALVDMQNNPSPFSTCSFLPEFPAWMPLHEWFPSVMLPTGMCTDVPWQFMGVTMAE. Residues Cys104 and Cys130 are joined by a disulfide bond. The helical transmembrane segment at 145-163 threads the bilayer; that stretch reads WMVVAFSGYLVALLLFIVP. At 164-175 the chain is on the cytoplasmic side; it reads ILSGSNKPSLYK.

Belongs to the DsbB family.

The protein resides in the cell inner membrane. In terms of biological role, required for disulfide bond formation in some periplasmic proteins. Acts by oxidizing the DsbA protein. The protein is Disulfide bond formation protein B of Shewanella sp. (strain ANA-3).